The sequence spans 297 residues: Urease accessory protein UreD 2 (297 aa).

This sequence belongs to the UreD family. As to quaternary structure, ureD, UreF and UreG form a complex that acts as a GTP-hydrolysis-dependent molecular chaperone, activating the urease apoprotein by helping to assemble the nickel containing metallocenter of UreC. The UreE protein probably delivers the nickel.

Its subcellular location is the cytoplasm. Its function is as follows. Required for maturation of urease via the functional incorporation of the urease nickel metallocenter. The polypeptide is Urease accessory protein UreD 2 (Methylorubrum populi (strain ATCC BAA-705 / NCIMB 13946 / BJ001) (Methylobacterium populi)).